The primary structure comprises 404 residues: Imidazolonepropionase (404 aa).

Residues histidine 73 and histidine 75 each coordinate Fe(3+). Residues histidine 73 and histidine 75 each coordinate Zn(2+). 4-imidazolone-5-propanoate is bound by residues arginine 82, tyrosine 145, and histidine 178. Residue tyrosine 145 coordinates N-formimidoyl-L-glutamate. Histidine 243 provides a ligand contact to Fe(3+). Histidine 243 contributes to the Zn(2+) binding site. Glutamine 246 is a 4-imidazolone-5-propanoate binding site. Fe(3+) is bound at residue aspartate 318. Aspartate 318 is a binding site for Zn(2+). Residues asparagine 320 and glycine 322 each contribute to the N-formimidoyl-L-glutamate site. A 4-imidazolone-5-propanoate-binding site is contributed by serine 323.

This sequence belongs to the metallo-dependent hydrolases superfamily. HutI family. The cofactor is Zn(2+). Fe(3+) serves as cofactor.

The protein localises to the cytoplasm. The enzyme catalyses 4-imidazolone-5-propanoate + H2O = N-formimidoyl-L-glutamate. It functions in the pathway amino-acid degradation; L-histidine degradation into L-glutamate; N-formimidoyl-L-glutamate from L-histidine: step 3/3. Catalyzes the hydrolytic cleavage of the carbon-nitrogen bond in imidazolone-5-propanoate to yield N-formimidoyl-L-glutamate. It is the third step in the universal histidine degradation pathway. The protein is Imidazolonepropionase of Bradyrhizobium diazoefficiens (strain JCM 10833 / BCRC 13528 / IAM 13628 / NBRC 14792 / USDA 110).